Consider the following 448-residue polypeptide: Phosphoglucosamine mutase (448 aa).

The active-site Phosphoserine intermediate is the Ser-100. Ser-100, Asp-240, Asp-242, and Asp-244 together coordinate Mg(2+). A Phosphoserine modification is found at Ser-100.

It belongs to the phosphohexose mutase family. Mg(2+) is required as a cofactor. In terms of processing, activated by phosphorylation.

The catalysed reaction is alpha-D-glucosamine 1-phosphate = D-glucosamine 6-phosphate. Catalyzes the conversion of glucosamine-6-phosphate to glucosamine-1-phosphate. The protein is Phosphoglucosamine mutase of Bacillus cereus (strain ATCC 10987 / NRS 248).